The sequence spans 110 residues: CHH-like protein (110 aa).

A signal peptide spans 1-23 (MHLSSVQFAWAALVALAVSAAGA). The propeptide occupies 24 to 35 (LPSSAPHHVERR). 3 disulfide bridges follow: Cys-42–Cys-78, Cys-58–Cys-74, and Cys-61–Cys-87. Valine amide is present on Val-107.

It belongs to the arthropod CHH/MIH/GIH/VIH hormone family.

It localises to the secreted. This Bombyx mori (Silk moth) protein is CHH-like protein (CHHL).